We begin with the raw amino-acid sequence, 440 residues long: Serine/threonine-protein kinase 2 (440 aa).

In terms of domain architecture, Protein kinase spans 85–440 (NDDFYHISTG…FSNWINGESC (356 aa)). Residues 91–99 (ISTGGYGIV) and Lys-115 each bind ATP. The active-site Proton acceptor is Asp-306.

This sequence belongs to the protein kinase superfamily. Ser/Thr protein kinase family. Poxviruses subfamily. In terms of processing, phosphorylated in vivo. Autophosphorylated in vitro.

The protein localises to the host endoplasmic reticulum. It localises to the host endoplasmic reticulum-Golgi intermediate compartment. It catalyses the reaction L-seryl-[protein] + ATP = O-phospho-L-seryl-[protein] + ADP + H(+). The enzyme catalyses L-threonyl-[protein] + ATP = O-phospho-L-threonyl-[protein] + ADP + H(+). Its function is as follows. Essential serine-protein kinase involved in the early stage of virion morphogenesis. This Sus scrofa (Pig) protein is Serine/threonine-protein kinase 2 (OPG054).